Here is a 363-residue protein sequence, read N- to C-terminus: Adenosine deaminase (363 aa).

His42 and His44 together coordinate Zn(2+). A purine D-ribonucleoside-binding positions include 44–46 (HLD), Asp172, and Gly201. Residues 170–184 (IGDTGHEAANIKASA) form a gating helix loop; regulates binding affinity for substrates and thus substrate selectivity region. Position 226 (His226) interacts with Zn(2+). A purine D-ribonucleoside-binding residues include Glu229, His253, and Asp310. Asp310 serves as a coordination point for Zn(2+).

The protein belongs to the metallo-dependent hydrolases superfamily. Adenosine and AMP deaminases family. Zn(2+) serves as cofactor.

It catalyses the reaction adenosine + H2O + H(+) = inosine + NH4(+). The enzyme catalyses S-methyl-5'-thioadenosine + H2O + H(+) = S-methyl-5'-thioinosine + NH4(+). Its pathway is purine metabolism; purine nucleoside salvage. Inhibited by coformycin and methylthiocoformycin (MT-coformycin). Functionally, catalyzes the hydrolytic deamination of adenosine to produce inosine. Unlike mammalian adenosine deaminases, also catalyzes the deamination of 5'-methylthioadenosine (MTA), a by-product of polyamine biosynthesis, to produce 5'-methylthioinosine (MTI). Plays an essential role in the purine salvage pathway which allows the parasite to use host cell purines for the synthesis of nucleic acids. This is Adenosine deaminase from Plasmodium vivax (strain Salvador I).